The sequence spans 858 residues: Leucine--tRNA ligase (858 aa).

The short motif at 42 to 52 (PYPSGRLHMGH) is the 'HIGH' region element. Positions 618–622 (KMSKS) match the 'KMSKS' region motif. Lys621 serves as a coordination point for ATP.

Belongs to the class-I aminoacyl-tRNA synthetase family.

The protein localises to the cytoplasm. The enzyme catalyses tRNA(Leu) + L-leucine + ATP = L-leucyl-tRNA(Leu) + AMP + diphosphate. This Vibrio cholerae serotype O1 (strain ATCC 39541 / Classical Ogawa 395 / O395) protein is Leucine--tRNA ligase.